The primary structure comprises 874 residues: ATP-dependent RNA helicase DDX54 (874 aa).

Residues 1–76 (MAAGRRVGPG…FPTSECVSDV (76 aa)) form a disordered region. The segment covering 20–30 (WKKKRLRKRRT) has biased composition (basic residues). A Phosphothreonine modification is found at T30. Phosphoserine occurs at positions 33, 38, 40, and 74. A compositionally biased stretch (acidic residues) spans 39 to 50 (DSDDGEFEIQAE). The Q motif motif lies at 95-123 (GGFQSMGLSYPVFKGIMKKGYKVPTPIQR). The region spanning 126–298 (IPVILDGKDV…RAGLTEPVLI (173 aa)) is the Helicase ATP-binding domain. 139–146 (ARTGSGKT) provides a ligand contact to ATP. The short motif at 246–249 (DEAD) is the DEAD box element. Residues 328–472 (YLLQNVVRPQ…ARPCEEPSVA (145 aa)) form the Helicase C-terminal domain. Polar residues predominate over residues 581-590 (ASSKDPSSQM). Residues 581–687 (ASSKDPSSQM…PKDFDSERGL (107 aa)) form a disordered region. Over residues 636–645 (TVEGVFTEVV) the composition is skewed to low complexity. Positions 664–685 (ETRQRDQEFYVPYRPKDFDSER) are enriched in basic and acidic residues. Residues S688 and S690 each carry the phosphoserine modification. The disordered stretch occupies residues 712–874 (AQNMSRGQQQ…SRKGKMRKRM (163 aa)). The segment covering 713 to 722 (QNMSRGQQQL) has biased composition (polar residues). Basic and acidic residues-rich tracts occupy residues 737–747 (QEDKKKIKTES) and 755–771 (YKRD…KIDD). S774 and S780 each carry phosphoserine. Over residues 812–823 (MRSELKTKEQIL) the composition is skewed to basic and acidic residues. The segment covering 864–874 (PSRKGKMRKRM) has biased composition (basic residues).

It belongs to the DEAD box helicase family. DDX54/DBP10 subfamily. As to quaternary structure, interacts in a hormone-dependent manner with nuclear receptors.

Its subcellular location is the nucleus. It localises to the nucleolus. It carries out the reaction ATP + H2O = ADP + phosphate + H(+). Has RNA-dependent ATPase activity. Represses the transcriptional activity of nuclear receptors. The sequence is that of ATP-dependent RNA helicase DDX54 (Ddx54) from Mus musculus (Mouse).